We begin with the raw amino-acid sequence, 127 residues long: Protein ApaG (127 aa).

The 125-residue stretch at 3–127 folds into the ApaG domain; the sequence is KTSIPDFQIT…FYLIAPLALH (125 aa).

This Bdellovibrio bacteriovorus (strain ATCC 15356 / DSM 50701 / NCIMB 9529 / HD100) protein is Protein ApaG.